A 546-amino-acid polypeptide reads, in one-letter code: 2-isopropylmalate synthase (546 aa).

Residues 8–271 enclose the Pyruvate carboxyltransferase domain; that stretch reads ILIFDTTLRD…NKFFNRNSDS (264 aa). Mn(2+) is bound by residues Asp-17, His-208, His-210, and Asn-244. The tract at residues 408-546 is regulatory domain; it reads QLSLVQVSCG…DKTLLSNPGK (139 aa).

The protein belongs to the alpha-IPM synthase/homocitrate synthase family. LeuA type 1 subfamily. In terms of assembly, homodimer. It depends on Mn(2+) as a cofactor.

The protein resides in the cytoplasm. It carries out the reaction 3-methyl-2-oxobutanoate + acetyl-CoA + H2O = (2S)-2-isopropylmalate + CoA + H(+). Its pathway is amino-acid biosynthesis; L-leucine biosynthesis; L-leucine from 3-methyl-2-oxobutanoate: step 1/4. Functionally, catalyzes the condensation of the acetyl group of acetyl-CoA with 3-methyl-2-oxobutanoate (2-ketoisovalerate) to form 3-carboxy-3-hydroxy-4-methylpentanoate (2-isopropylmalate). The polypeptide is 2-isopropylmalate synthase (Prochlorococcus marinus (strain MIT 9215)).